Consider the following 326-residue polypeptide: Beta-ketoacyl-[acyl-carrier-protein] synthase III (326 aa).

Residues Cys120 and His253 contribute to the active site. Residues 254–258 (QANIR) are ACP-binding. Asn283 is a catalytic residue.

The protein belongs to the thiolase-like superfamily. FabH family. In terms of assembly, homodimer.

It localises to the cytoplasm. The enzyme catalyses malonyl-[ACP] + acetyl-CoA + H(+) = 3-oxobutanoyl-[ACP] + CO2 + CoA. It functions in the pathway lipid metabolism; fatty acid biosynthesis. Its function is as follows. Catalyzes the condensation reaction of fatty acid synthesis by the addition to an acyl acceptor of two carbons from malonyl-ACP. Catalyzes the first condensation reaction which initiates fatty acid synthesis and may therefore play a role in governing the total rate of fatty acid production. Possesses both acetoacetyl-ACP synthase and acetyl transacylase activities. Its substrate specificity determines the biosynthesis of branched-chain and/or straight-chain of fatty acids. This is Beta-ketoacyl-[acyl-carrier-protein] synthase III from Ralstonia pickettii (strain 12J).